The sequence spans 470 residues: METNGIKLTPRDIVSKLNEYIVGQDDAKRKVAIALRNRYRRSLLTEEEKQEVAPKNILMIGPTGVGKTEIARRMARLVGAPFIKVEATKFTEVGYVGRDVESMVRDLVDVAVRLVKDQKKALVQDEAQDKANEKLVKLLVPSMKKKANNNTNSNNPLESLFGGSIPNFGQNNDDEEETPTDEVKTKRSEIKQQLLNGQLEDEKVRLKVEQDPAAMGMLGTNQNQQMQDMMNQLMPKKKVEREVPVKTARKILTDEFADELIDQETANQEAIELAEQMGIIFIDEIDKVATNNQNSGQDVSRQGVQRDILPILEGSMVQTKYGTVNTEHMLFIGAGAFHVSKPSDLIPELQGRFPIRVELESLSVEDFVRILTEPKLSLIKQYEALLQTEQVTVKFTDEAIKRLAEIAFQVNQDTDNIGARRLHTILEKMLEDLSFEAPSMPNAVVDITPQYVDDKLKSISTNKDLSAFIL.

ATP-binding positions include valine 22 and 64–69 (GVGKTE). Positions 145 to 187 (KKANNNTNSNNPLESLFGGSIPNFGQNNDDEEETPTDEVKTKR) are disordered. ATP-binding residues include aspartate 283, glutamate 348, and arginine 420.

This sequence belongs to the ClpX chaperone family. HslU subfamily. As to quaternary structure, a double ring-shaped homohexamer of HslV is capped on each side by a ring-shaped HslU homohexamer. The assembly of the HslU/HslV complex is dependent on binding of ATP.

It is found in the cytoplasm. In terms of biological role, ATPase subunit of a proteasome-like degradation complex; this subunit has chaperone activity. The binding of ATP and its subsequent hydrolysis by HslU are essential for unfolding of protein substrates subsequently hydrolyzed by HslV. HslU recognizes the N-terminal part of its protein substrates and unfolds these before they are guided to HslV for hydrolysis. The chain is ATP-dependent protease ATPase subunit HslU from Staphylococcus saprophyticus subsp. saprophyticus (strain ATCC 15305 / DSM 20229 / NCIMB 8711 / NCTC 7292 / S-41).